The chain runs to 635 residues: Biosynthetic arginine decarboxylase (635 aa).

Lys101 bears the N6-(pyridoxal phosphate)lysine mark. 284–294 contacts substrate; it reads VDVGGGLGVDY.

This sequence belongs to the Orn/Lys/Arg decarboxylase class-II family. SpeA subfamily. Mg(2+) is required as a cofactor. It depends on pyridoxal 5'-phosphate as a cofactor.

The catalysed reaction is L-arginine + H(+) = agmatine + CO2. The protein operates within amine and polyamine biosynthesis; agmatine biosynthesis; agmatine from L-arginine: step 1/1. Catalyzes the biosynthesis of agmatine from arginine. The sequence is that of Biosynthetic arginine decarboxylase from Tolumonas auensis (strain DSM 9187 / NBRC 110442 / TA 4).